Here is a 120-residue protein sequence, read N- to C-terminus: Large ribosomal subunit protein bL20c (120 aa).

The protein belongs to the bacterial ribosomal protein bL20 family.

It is found in the plastid. Its function is as follows. Binds directly to 23S ribosomal RNA and is necessary for the in vitro assembly process of the 50S ribosomal subunit. It is not involved in the protein synthesizing functions of that subunit. The chain is Large ribosomal subunit protein bL20c from Cuscuta obtusiflora (Peruvian dodder).